Here is a 176-residue protein sequence, read N- to C-terminus: Ribosome maturation factor RimM (176 aa).

A PRC barrel domain is found at 97 to 176; that stretch reads EDEFYWRDLI…QILVDWDPDF (80 aa).

It belongs to the RimM family. In terms of assembly, binds ribosomal protein uS19.

The protein localises to the cytoplasm. Functionally, an accessory protein needed during the final step in the assembly of 30S ribosomal subunit, possibly for assembly of the head region. Essential for efficient processing of 16S rRNA. May be needed both before and after RbfA during the maturation of 16S rRNA. It has affinity for free ribosomal 30S subunits but not for 70S ribosomes. This Shewanella sp. (strain ANA-3) protein is Ribosome maturation factor RimM.